The chain runs to 657 residues: MEENIESVEEWVNKLDIETTKDIHVPKLLFDQVIGQDQAGEIVKKAALQRRHVILIGEPGTGKSMLAQSMVDFLPKSELEDILVFPNPEDPNKPKIKTVPAGKGKEIVRQYQIKAEREKRDRSRSIMFVIFSVVLLGIIAAIVLRSITLIFFAIMAAAFLYMAMAFNPVIRNERAMVPKLLVSHNPNDKPPFVDSTGAHSGALLGDVRHDPFQSGGLETPAHERVEAGNIHKAHKGVLFIDEINLLRPEDQQAILTALQEKKYPISGQSERSAGAMVQTEPVPCDFVLVAAGNYDAIRNMHPALRSRIRGYGYEVVVNDYMDDNDENRRKLVQFIAQEVEKDKKIPHFDKSAIIEVIKEAQKRSGRRNKLTLRLRELGGLVRVAGDIAVSQKKTVVTAADVIAAKNLAKPLEQQIADRSIEIKKIYKTFRTEGSVVGMVNGLAVVGADTGMSEYTGVVLPIVAEVTPAEHKGAGNIIATGKLGDIAKEAVLNVSAVFKKLTGKDISNMDIHIQFVGTYEGVEGDSASVSIATAVISAIENIPVDQSVAMTGSLSVRGDVLPVGGVTAKVEAAIEAGLNKVIVPELNYSDIILDADHVNKIEIIPAKTIEDVLRVALVNSPEKEKLFDRISNLINAAKIIKPQRPATPATTRAGNNAA.

The Cytoplasmic segment spans residues 1-123 (MEENIESVEE…KAEREKRDRS (123 aa)). Position 57–64 (57–64 (GEPGTGKS)) interacts with ATP. The chain crosses the membrane as a helical span at residues 124-144 (RSIMFVIFSVVLLGIIAAIVL). Arg145 is a topological domain (extracellular). The helical transmembrane segment at 146 to 166 (SITLIFFAIMAAAFLYMAMAF) threads the bilayer. Residues 167–657 (NPVIRNERAM…ATTRAGNNAA (491 aa)) lie on the Cytoplasmic side of the membrane. The Lon proteolytic domain maps to 433 to 618 (GSVVGMVNGL…EDVLRVALVN (186 aa)). Residues Ser525 and Lys568 contribute to the active site.

The protein belongs to the peptidase S16 family. Archaeal LonB subfamily. In terms of assembly, homohexamer. Organized in a ring with a central cavity.

It is found in the cell membrane. Its function is as follows. ATP-dependent serine protease that mediates the selective degradation of mutant and abnormal proteins as well as certain short-lived regulatory proteins. Degrades polypeptides processively. This Thermoplasma acidophilum (strain ATCC 25905 / DSM 1728 / JCM 9062 / NBRC 15155 / AMRC-C165) protein is Archaeal Lon protease.